The primary structure comprises 797 residues: LPS-assembly protein LptD (797 aa).

The N-terminal stretch at 1 to 30 (MKEGRKRLRAGYCYMLAGVVGVASTGSSRA) is a signal peptide.

Belongs to the LptD family. As to quaternary structure, component of the lipopolysaccharide transport and assembly complex. Interacts with LptE and LptA.

It is found in the cell outer membrane. In terms of biological role, together with LptE, is involved in the assembly of lipopolysaccharide (LPS) at the surface of the outer membrane. This chain is LPS-assembly protein LptD, found in Hahella chejuensis (strain KCTC 2396).